We begin with the raw amino-acid sequence, 207 residues long: MIRKCTEHGYFRGGSCLQCKRPGRYLLDDNKEEKLGRFVSGTLRHFPESAGVTMDRFGWVNINDFCDVMRKRYSWMRKEYLYALVESDEKGRYEIRNSRIRARYGHSVNIDLDYRESDSPYLYYGASPEEVDVLLENGIFPIKQRYVHLSTSYEKAVEVALIHTENPVILQIDAFKAQEDGISLKLATDDIVLAERIPPEYLFVVEE.

Belongs to the KptA/TPT1 family.

Functionally, removes the 2'-phosphate from RNA via an intermediate in which the phosphate is ADP-ribosylated by NAD followed by a presumed transesterification to release the RNA and generate ADP-ribose 1''-2''-cyclic phosphate (APPR&gt;P). May function as an ADP-ribosylase. The polypeptide is Probable RNA 2'-phosphotransferase (Methanosarcina barkeri (strain Fusaro / DSM 804)).